The primary structure comprises 316 residues: Apolipoprotein E (316 aa).

A signal peptide spans 1–18 (MKVLWVALVVALLAGCQA). Tandem repeats lie at residues 79–100 (VLME…GQLA), 101–122 (PMAQ…ARLG), 123–144 (SDME…AMLG), 145–166 (QSTE…KRLL), 167–188 (RDAD…EGAE), 189–210 (RSVS…SRAA), 211–232 (TLST…QKLH), and 233–254 (GRLE…QQLE). The interval 79–254 (VLMEETMKEV…RLDKMRQQLE (176 aa)) is 8 X 22 AA approximate tandem repeats. Met142 is modified (methionine sulfoxide). Ser146 is modified (phosphoserine). Positions 157–167 (HLRKLRKRLLR) are LDL and other lipoprotein receptors binding. 161 to 164 (LRKR) is a heparin binding site. Residues 209–289 (AATLSTQVGQ…SWFEPLVEDM (81 aa)) form a lipid-binding and lipoprotein association region. Thr211 carries an O-linked (GalNAc...) threonine glycan. 228–235 (RQKLHGRL) contributes to the heparin binding site. The tract at residues 265–316 (SQIRLQAEAFQARLRSWFEPLVEDMQRQWAGLVEKVQLALHLSPTSPPSENH) is homooligomerization. Residues 277-289 (RLRSWFEPLVEDM) are specificity for association with VLDL.

This sequence belongs to the apolipoprotein A1/A4/E family. In terms of assembly, homotetramer. May interact with ABCA1; functionally associated with ABCA1 in the biogenesis of HDLs. May interact with APP/A4 amyloid-beta peptide; the interaction is extremely stable in vitro but its physiological significance is unclear. May interact with MAPT. May interact with MAP2. In the cerebrospinal fluid, interacts with secreted SORL1. Interacts with PMEL; this allows the loading of PMEL luminal fragment on ILVs to induce fibril nucleation. In terms of processing, APOE exists as multiple glycosylated and sialylated glycoforms within cells and in plasma. The extent of glycosylation and sialylation are tissue and context specific. Glycated in plasma VLDL. Post-translationally, phosphorylated by FAM20C in the extracellular medium.

The protein localises to the secreted. It localises to the extracellular space. It is found in the extracellular matrix. Its subcellular location is the extracellular vesicle. The protein resides in the endosome. The protein localises to the multivesicular body. In terms of biological role, APOE is an apolipoprotein, a protein associating with lipid particles, that mainly functions in lipoprotein-mediated lipid transport between organs via the plasma and interstitial fluids. APOE is a core component of plasma lipoproteins and is involved in their production, conversion and clearance. Apolipoproteins are amphipathic molecules that interact both with lipids of the lipoprotein particle core and the aqueous environment of the plasma. As such, APOE associates with chylomicrons, chylomicron remnants, very low density lipoproteins (VLDL) and intermediate density lipoproteins (IDL) but shows a preferential binding to high-density lipoproteins (HDL). It also binds a wide range of cellular receptors including the LDL receptor/LDLR and the very low-density lipoprotein receptor/VLDLR that mediate the cellular uptake of the APOE-containing lipoprotein particles. Finally, APOE also has a heparin-binding activity and binds heparan-sulfate proteoglycans on the surface of cells, a property that supports the capture and the receptor-mediated uptake of APOE-containing lipoproteins by cells. This is Apolipoprotein E (APOE) from Ovis aries musimon (Mouflon).